A 149-amino-acid chain; its full sequence is Cytochrome c-type biogenesis protein CcmE (149 aa).

At 1–7 (MTRKQKR) the chain is on the cytoplasmic side. The helical; Signal-anchor for type II membrane protein transmembrane segment at 8–28 (LAVIAGGMGFIATAVLLVLFA) threads the bilayer. Residues 29–149 (FSQSVAYFYM…GVWKGEEASQ (121 aa)) are Periplasmic-facing. Heme-binding residues include H123 and Y127.

The protein belongs to the CcmE/CycJ family.

The protein resides in the cell inner membrane. In terms of biological role, heme chaperone required for the biogenesis of c-type cytochromes. Transiently binds heme delivered by CcmC and transfers the heme to apo-cytochromes in a process facilitated by CcmF and CcmH. The chain is Cytochrome c-type biogenesis protein CcmE from Rhizobium rhizogenes (strain K84 / ATCC BAA-868) (Agrobacterium radiobacter).